We begin with the raw amino-acid sequence, 420 residues long: Gamma-glutamyl phosphate reductase (420 aa).

Belongs to the gamma-glutamyl phosphate reductase family.

It is found in the cytoplasm. The enzyme catalyses L-glutamate 5-semialdehyde + phosphate + NADP(+) = L-glutamyl 5-phosphate + NADPH + H(+). It participates in amino-acid biosynthesis; L-proline biosynthesis; L-glutamate 5-semialdehyde from L-glutamate: step 2/2. Catalyzes the NADPH-dependent reduction of L-glutamate 5-phosphate into L-glutamate 5-semialdehyde and phosphate. The product spontaneously undergoes cyclization to form 1-pyrroline-5-carboxylate. This Shewanella amazonensis (strain ATCC BAA-1098 / SB2B) protein is Gamma-glutamyl phosphate reductase.